Consider the following 115-residue polypeptide: Large ribosomal subunit protein bL19 (115 aa).

The protein belongs to the bacterial ribosomal protein bL19 family.

Functionally, this protein is located at the 30S-50S ribosomal subunit interface and may play a role in the structure and function of the aminoacyl-tRNA binding site. The protein is Large ribosomal subunit protein bL19 of Finegoldia magna (strain ATCC 29328 / DSM 20472 / WAL 2508) (Peptostreptococcus magnus).